We begin with the raw amino-acid sequence, 240 residues long: Ribose-5-phosphate isomerase A (240 aa).

Residues 41 to 44 (TGST), 94 to 97 (DGAD), and 107 to 110 (KGGG) contribute to the substrate site. Glu-116 functions as the Proton acceptor in the catalytic mechanism. Lys-134 contacts substrate.

This sequence belongs to the ribose 5-phosphate isomerase family. As to quaternary structure, homodimer.

It carries out the reaction aldehydo-D-ribose 5-phosphate = D-ribulose 5-phosphate. It functions in the pathway carbohydrate degradation; pentose phosphate pathway; D-ribose 5-phosphate from D-ribulose 5-phosphate (non-oxidative stage): step 1/1. In terms of biological role, catalyzes the reversible conversion of ribose-5-phosphate to ribulose 5-phosphate. This Polaromonas sp. (strain JS666 / ATCC BAA-500) protein is Ribose-5-phosphate isomerase A.